A 90-amino-acid chain; its full sequence is Beta-microseminoprotein (90 aa).

Intrachain disulfides connect Cys2–Cys16, Cys34–Cys70, Cys37–Cys46, Cys39–Cys47, and Cys61–Cys84. The residue at position 90 (Val90) is a Valine amide.

The protein belongs to the beta-microseminoprotein family.

The protein resides in the secreted. This is Beta-microseminoprotein (MSMB) from Struthio camelus (Common ostrich).